The sequence spans 354 residues: Rhodopsin (354 aa).

Topologically, residues 1–36 (MNGTEGPYFYIPMLNTTGVVRSPYEYPQYYLVNPAA) are extracellular. Asn-2 and Asn-15 each carry an N-linked (GlcNAc...) asparagine glycan. Residues 37–61 (YAVLGAYMFFLILVGFPINFLTLYV) traverse the membrane as a helical segment. The Cytoplasmic segment spans residues 62–73 (TIEHKKLRTPLN). The helical transmembrane segment at 74–96 (YILLNLAVADLFMVFGGFTTTIY) threads the bilayer. The Extracellular portion of the chain corresponds to 97–110 (TSMHGYFVLGRLGC). Cysteines 110 and 187 form a disulfide. The chain crosses the membrane as a helical span at residues 111–133 (NVEGFSATLGGEIALWSLVVLAI). The 'Ionic lock' involved in activated form stabilization signature appears at 134–136 (ERW). Over 134–152 (ERWVVVCKPISNFRFGENH) the chain is Cytoplasmic. A helical transmembrane segment spans residues 153–173 (AIMGVAFTWFMAAACAVPPLF). Over 174 to 202 (GWSRYIPEGMQCSCGIDYYTRAEGFNNES) the chain is Extracellular. Asn-200 carries an N-linked (GlcNAc...) asparagine glycan. The chain crosses the membrane as a helical span at residues 203–224 (FVIYMFTCHFCIPLMVVFFCYG). The Cytoplasmic segment spans residues 225-252 (RLVCAVKEAAAAQQESETTQRAEREVTR). The chain crosses the membrane as a helical span at residues 253–274 (MVIIMVVSFLVSWVPYASVAWY). The Extracellular portion of the chain corresponds to 275–286 (IFTHQGSEFGPL). The helical transmembrane segment at 287 to 308 (FMTIPAFFAKSSSIYNPMIYIC) threads the bilayer. Lys-296 bears the N6-(retinylidene)lysine mark. The Cytoplasmic portion of the chain corresponds to 309 to 354 (MNKQFRHCMITTLCCGKNPFEEEEGASSTASKTEASSVSSSSVSPA). Residues Cys-322 and Cys-323 are each lipidated (S-palmitoyl cysteine). The interval 329–354 (EEEEGASSTASKTEASSVSSSSVSPA) is disordered. A compositionally biased stretch (low complexity) spans 334-354 (ASSTASKTEASSVSSSSVSPA).

Belongs to the G-protein coupled receptor 1 family. Opsin subfamily. Phosphorylated on some or all of the serine and threonine residues present in the C-terminal region. In terms of processing, contains one covalently linked retinal chromophore.

It localises to the membrane. It is found in the cell projection. The protein localises to the cilium. The protein resides in the photoreceptor outer segment. Its function is as follows. Photoreceptor required for image-forming vision at low light intensity. While most salt water fish species use retinal as chromophore, most freshwater fish use 3-dehydroretinal, or a mixture of retinal and 3-dehydroretinal. Light-induced isomerization of 11-cis to all-trans retinal triggers a conformational change that activates signaling via G-proteins. Subsequent receptor phosphorylation mediates displacement of the bound G-protein alpha subunit by arrestin and terminates signaling. This Atherina boyeri (Big-scale sand smelt) protein is Rhodopsin (rho).